A 457-amino-acid polypeptide reads, in one-letter code: ATP synthase subunit beta (457 aa).

147-154 (GGAGVGKT) contacts ATP.

The protein belongs to the ATPase alpha/beta chains family. F-type ATPases have 2 components, CF(1) - the catalytic core - and CF(0) - the membrane proton channel. CF(1) has five subunits: alpha(3), beta(3), gamma(1), delta(1), epsilon(1). CF(0) has three main subunits: a(1), b(2) and c(9-12). The alpha and beta chains form an alternating ring which encloses part of the gamma chain. CF(1) is attached to CF(0) by a central stalk formed by the gamma and epsilon chains, while a peripheral stalk is formed by the delta and b chains.

The protein resides in the cell inner membrane. It carries out the reaction ATP + H2O + 4 H(+)(in) = ADP + phosphate + 5 H(+)(out). Functionally, produces ATP from ADP in the presence of a proton gradient across the membrane. The catalytic sites are hosted primarily by the beta subunits. This chain is ATP synthase subunit beta, found in Actinobacillus pleuropneumoniae serotype 3 (strain JL03).